A 339-amino-acid polypeptide reads, in one-letter code: Ketol-acid reductoisomerase (NADP(+)) (339 aa).

The region spanning 1-182 is the KARI N-terminal Rossmann domain; sequence MRVYYDRDAD…GGGRSGIIET (182 aa). NADP(+) contacts are provided by residues 24 to 27, lysine 48, serine 51, threonine 53, and 83 to 86; these read YGSQ and DELQ. Residue histidine 108 is part of the active site. Glycine 134 is an NADP(+) binding site. In terms of domain architecture, KARI C-terminal knotted spans 183-328; sequence NFREECETDL…AKLRAMMPWI (146 aa). Mg(2+)-binding residues include aspartate 191, glutamate 195, glutamate 227, and glutamate 231. Serine 252 contributes to the substrate binding site.

The protein belongs to the ketol-acid reductoisomerase family. The cofactor is Mg(2+).

It carries out the reaction (2R)-2,3-dihydroxy-3-methylbutanoate + NADP(+) = (2S)-2-acetolactate + NADPH + H(+). The enzyme catalyses (2R,3R)-2,3-dihydroxy-3-methylpentanoate + NADP(+) = (S)-2-ethyl-2-hydroxy-3-oxobutanoate + NADPH + H(+). Its pathway is amino-acid biosynthesis; L-isoleucine biosynthesis; L-isoleucine from 2-oxobutanoate: step 2/4. The protein operates within amino-acid biosynthesis; L-valine biosynthesis; L-valine from pyruvate: step 2/4. Involved in the biosynthesis of branched-chain amino acids (BCAA). Catalyzes an alkyl-migration followed by a ketol-acid reduction of (S)-2-acetolactate (S2AL) to yield (R)-2,3-dihydroxy-isovalerate. In the isomerase reaction, S2AL is rearranged via a Mg-dependent methyl migration to produce 3-hydroxy-3-methyl-2-ketobutyrate (HMKB). In the reductase reaction, this 2-ketoacid undergoes a metal-dependent reduction by NADPH to yield (R)-2,3-dihydroxy-isovalerate. The protein is Ketol-acid reductoisomerase (NADP(+)) of Mesorhizobium japonicum (strain LMG 29417 / CECT 9101 / MAFF 303099) (Mesorhizobium loti (strain MAFF 303099)).